Here is a 54-residue protein sequence, read N- to C-terminus: MGMSFSHLLIVLLIIFVLFGAGKLPQVMSDLAKGLKAFKEGMKDDGNDNDKTNN.

A helical membrane pass occupies residues 1-21 (MGMSFSHLLIVLLIIFVLFGA).

It belongs to the TatA/E family. In terms of assembly, the Tat system comprises two distinct complexes: a TatABC complex, containing multiple copies of TatA, TatB and TatC subunits, and a separate TatA complex, containing only TatA subunits. Substrates initially bind to the TatABC complex, which probably triggers association of the separate TatA complex to form the active translocon.

It is found in the cell inner membrane. Part of the twin-arginine translocation (Tat) system that transports large folded proteins containing a characteristic twin-arginine motif in their signal peptide across membranes. TatA could form the protein-conducting channel of the Tat system. The sequence is that of Sec-independent protein translocase protein TatA from Rickettsia prowazekii (strain Madrid E).